Consider the following 495-residue polypeptide: BUB3-interacting and GLEBS motif-containing protein ZNF207 (495 aa).

The tract at residues 1–92 is microtubule-binding region; the sequence is MGRKKKKQLK…EGIPEKDMDE (92 aa). 2 consecutive C2H2-type zinc fingers follow at residues 11-34 and 35-58; these read PWCW…KAKH and FKCH…MQVH. Over residues 99–111 the composition is skewed to basic and acidic residues; it reads QKTQESQKKKQQD. Disordered regions lie at residues 99-161, 252-292, and 316-372; these read QKTQ…PGIP, PPAP…SNSE, and VGTD…ATLT. Over residues 112–121 the composition is skewed to acidic residues; that stretch reads DSDEYDDDES. The segment covering 127–136 has biased composition (polar residues); the sequence is FQPQPVQPQQ. A compositionally biased stretch (pro residues) spans 142 to 161; sequence MAQPGLPPVPGAPGMPPGIP. 2 stretches are compositionally biased toward low complexity: residues 283-292 and 326-372; these read SSSTASSNSE and TPAA…ATLT. Positions 376 to 408 are GLEBS; sequence ATSKLIHPDEDISLEERRAQLPKYQRNLPRPGQ. The interval 462–495 is disordered; sequence PYGQGPPMVPPYQGGPPRPPMGMRPPVMSQGGRY. The span at 464 to 484 shows a compositional bias: pro residues; sequence GQGPPMVPPYQGGPPRPPMGM.

As to quaternary structure, interacts (via GLEBS region) with BUB3. In day-13 embryo, strongly expressed in the nervous system (brain, spinal cord and dorsal root ganglia), with strong to weak expression in other regions. Continues to be strongly expressed in the neonatal brain while expression is weak in the brain and spinal cord of adult.

The protein localises to the nucleus. The protein resides in the chromosome. It localises to the centromere. It is found in the kinetochore. Its subcellular location is the cytoplasm. The protein localises to the cytoskeleton. The protein resides in the spindle. Kinetochore- and microtubule-binding protein that plays a key role in spindle assembly. ZNF207/BuGZ is mainly composed of disordered low-complexity regions and undergoes phase transition or coacervation to form temperature-dependent liquid droplets. Coacervation promotes microtubule bundling and concentrates tubulin, promoting microtubule polymerization and assembly of spindle and spindle matrix by concentrating its building blocks. Also acts as a regulator of mitotic chromosome alignment by mediating the stability and kinetochore loading of BUB3. Mechanisms by which BUB3 is protected are unclear: according to a first report, ZNF207/BuGZ may act by blocking ubiquitination and proteasomal degradation of BUB3. According to another report, the stabilization is independent of the proteasome. This chain is BUB3-interacting and GLEBS motif-containing protein ZNF207, found in Mus musculus (Mouse).